Here is a 219-residue protein sequence, read N- to C-terminus: Glycosylphosphatidylinositol anchor biosynthesis protein 11 (219 aa).

The Cytoplasmic segment spans residues 1–45 (MPAKKRTRKTVKKTVSFSDDTTLTTHQNREKKNVDHDRPPVYVRK). Ser-16 carries the phosphoserine modification. Residues 46-66 (TPLMTFPYHLVALLYYYVFVS) form a helical membrane-spanning segment. A topological domain (lumenal) is located at residue Ser-67. Residues 68–88 (NFNTVKLLSFLIPTQVAYLVL) traverse the membrane as a helical segment. Over 89-108 (QFNKCTVYGNKIIKINYSLT) the chain is Cytoplasmic. The helical transmembrane segment at 109–129 (IICLGVTFLLSFPTMLLTILF) threads the bilayer. Over 130 to 135 (GAPLMD) the chain is Lumenal. A helical membrane pass occupies residues 136–156 (LLWETWLLSLHFAFLAYPAVY). The Cytoplasmic segment spans residues 157–170 (SVFNCDFKVGLWKK). Residues 171–191 (YFIFIVVGGWISCVVIPLDWD) traverse the membrane as a helical segment. The Lumenal portion of the chain corresponds to 192 to 198 (RDWQNWP). The helical transmembrane segment at 199–217 (IPIVVGGYLGALVGYTIGA) threads the bilayer. The Cytoplasmic segment spans residues 218-219 (YI).

This sequence belongs to the PIGF family.

Its subcellular location is the endoplasmic reticulum membrane. The protein operates within glycolipid biosynthesis; glycosylphosphatidylinositol-anchor biosynthesis. Its function is as follows. Acts in the GPI biosynthetic pathway between GlcNAc-PI synthesis and GPI transfer to protein. Required for the formation of complete GPI precursors CP1 and CP2. The protein is Glycosylphosphatidylinositol anchor biosynthesis protein 11 (GPI11) of Saccharomyces cerevisiae (strain ATCC 204508 / S288c) (Baker's yeast).